Reading from the N-terminus, the 860-residue chain is DNA mismatch repair protein MutS (860 aa).

608 to 615 (GPNMAGKS) is a binding site for ATP.

It belongs to the DNA mismatch repair MutS family.

In terms of biological role, this protein is involved in the repair of mismatches in DNA. It is possible that it carries out the mismatch recognition step. This protein has a weak ATPase activity. The sequence is that of DNA mismatch repair protein MutS from Borrelia turicatae (strain 91E135).